The chain runs to 1077 residues: Ubiquitin-activating enzyme E1 2 (1077 aa).

The tract at residues 16-36 (SPMKKRRIDHTESADGSAINA) is disordered. ATP contacts are provided by residues Ala-499, Asp-525, Arg-536, Lys-549, and 597–598 (DN). The active-site Glycyl thioester intermediate is the Cys-653.

Belongs to the ubiquitin-activating E1 family. As to quaternary structure, monomer. As to expression, expressed in leaves, flowers, roots and stems. Detected in germinating seeds, cotyledons, hypocotyls, vascular tissues, anthers, filaments, pollen, style, stigma, sepals, petals, ovary, developing ovules, funiculi and silique walls.

It catalyses the reaction ATP + ubiquitin + [E1 ubiquitin-activating enzyme]-L-cysteine = AMP + diphosphate + S-ubiquitinyl-[E1 ubiquitin-activating enzyme]-L-cysteine.. Its pathway is protein modification; protein ubiquitination. Activates ubiquitin by first adenylating its C-terminal glycine residue with ATP, and thereafter linking this residue to the side chain of a cysteine residue in E1, yielding a ubiquitin-E1 thioester and free AMP. The protein is Ubiquitin-activating enzyme E1 2 (UBA2) of Arabidopsis thaliana (Mouse-ear cress).